The primary structure comprises 195 residues: Endoribonuclease YbeY (195 aa).

Positions 152, 156, and 162 each coordinate Zn(2+).

This sequence belongs to the endoribonuclease YbeY family. Zn(2+) is required as a cofactor.

It localises to the cytoplasm. Its function is as follows. Single strand-specific metallo-endoribonuclease involved in late-stage 70S ribosome quality control and in maturation of the 3' terminus of the 16S rRNA. This Rhodopseudomonas palustris (strain BisB5) protein is Endoribonuclease YbeY.